A 1673-amino-acid chain; its full sequence is Glutamine and serine-rich protein 1 (1673 aa).

Disordered stretches follow at residues 265-322, 411-543, 872-892, 923-961, 1050-1081, 1149-1182, 1216-1272, and 1390-1476; these read VIPS…SSQA, DQTR…KSYV, RHMS…LSIN, QDLP…PKEG, DENA…QYSS, VIRP…KAEE, LSAL…EQLA, and KSKV…PPPI. The span at 289 to 309 shows a compositional bias: polar residues; that stretch reads SSKTPKSQSVVSPELTQSYTK. Low complexity-rich tracts occupy residues 310 to 322 and 411 to 458; these read SSQN…SSQA and DQTR…PSDS. Residues 459 to 539 show a composition bias toward polar residues; it reads YTSGQNQTLA…MQNSRTTADS (81 aa). The segment covering 947 to 956 has biased composition (polar residues); the sequence is NIKNPPNVNQ. Over residues 1222–1233 the composition is skewed to basic and acidic residues; that stretch reads NSEKRLKTEGDK. Composition is skewed to polar residues over residues 1259 to 1272 and 1397 to 1411; these read KPSQ…EQLA and ARTT…SKVS. A compositionally biased stretch (basic and acidic residues) spans 1435 to 1451; sequence TKAEPPPKKRKQWKEEF. The segment covering 1452-1462 has biased composition (low complexity); it reads SSSQSDSSPDM.

It localises to the chromosome. Plays an essential role in the protection and maintenance of transcriptional and developmental programs. Protects many bivalent promoters and poised enhancers from hypermethylation, showing a marked preference for these regulatory elements over other types of promoters or enhancers. Mechanistically, cooperates with tet1 and binds to DNA in a common complex to inhibit the binding of dnmt3a/3b and therefore de novo methylation. The sequence is that of Glutamine and serine-rich protein 1 (qser1) from Xenopus laevis (African clawed frog).